We begin with the raw amino-acid sequence, 191 residues long: ECF RNA polymerase sigma-E factor (191 aa).

Residues 1 to 153 form a binds RNAP core region; it reads MSEQLTDQVL…MAITLRELDG (153 aa). Positions 25–92 are sigma-70 factor domain-2; that stretch reads LVVRYQHKVA…KNYLVAQGRR (68 aa). Residues 48-61 carry the Polymerase core binding motif; that stretch reads DVVQEAFIKAYRAL. Residues 129–180 form a sigma-70 factor domain-4 region; that stretch reads QIVFRTIESLPEDLRMAITLRELDGLSYEEIAAIMDCPVGTVRSRIFRAREA. A DNA-binding region (H-T-H motif) is located at residues 156-175; the sequence is YEEIAAIMDCPVGTVRSRIF.

It belongs to the sigma-70 factor family. ECF subfamily. In terms of assembly, interacts transiently with the RNAP catalytic core formed by RpoA, RpoB, RpoC and RpoZ (2 alpha, 1 beta, 1 beta' and 1 omega subunit) to form the RNAP holoenzyme that can initiate transcription. Interacts 1:1 with anti-sigma-E factor RseA which prevents binding to RNAP catalytic core.

The protein localises to the cytoplasm. With respect to regulation, ECF sigma-E is held in an inactive form by its cognate anti-sigma factor (RseA) until released by regulated intramembrane proteolysis (RIP). RIP occurs when an extracytoplasmic signal (periplasmic stress and excess LPS) triggers a concerted proteolytic cascade to transmit information and elicit cellular responses. The anti-sigma factor RseA is an inner membrane protein, binding sigma-E in the cytoplasm and RseB in the periplasm. RseA is first cut extracytoplasmically (site-1 protease, S1P, by DegS), then within the membrane itself (site-2 protease, S2P, by RseP), while cytoplasmic proteases (predominantly ClpX-ClpP) finish degrading the regulatory protein, liberating sigma-E. Degradation of RseA requires 2 signals to activate DegS; an outer membrane protein (OMP) signal activates DegS, while an LPS signal causes release of RseB from RseA, freeing RseA to be cleaved. Its function is as follows. Sigma factors are initiation factors that promote the attachment of RNA polymerase (RNAP) to specific initiation sites and are then released. Extracytoplasmic function (ECF) sigma-E controls the envelope stress response, responding to periplasmic protein stress, increased levels of periplasmic lipopolysaccharide (LPS) as well as heat shock and oxidative stress; it controls protein processing in the extracytoplasmic compartment. The chain is ECF RNA polymerase sigma-E factor (rpoE) from Escherichia coli O157:H7.